A 249-amino-acid chain; its full sequence is MKLSAEGTVMASSEEAAQLSCDTSSSHARNSKEQDFQPTQQIGSPTALGMGAFAIAFTTLSMSLMEWRSAAITNAYIGNCFFTAGMGLVLVAQWELVRGNSFGHTVFGGFGLFNLAFGAINAPAFGVADAFKDDPAALNNAIGYFLLVWGIFVLFFTVAAMPMNLVYTGMLGTSQITYTLLAASYFSFADDHASAGLALKKAAGAFGFVSGLFAWYTVGHLMCQDALLFSFPLGDTSPLYARLQRKKRH.

6 helical membrane passes run 42 to 62 (IGSP…TLSM), 71 to 91 (AITN…LVLV), 106 to 126 (VFGG…PAFG), 141 to 161 (AIGY…VAAM), 169 to 189 (GMLG…FSFA), and 202 to 222 (AAGA…GHLM).

It belongs to the acetate uptake transporter (AceTr) (TC 2.A.96) family.

It localises to the endoplasmic reticulum membrane. Its pathway is mycotoxin biosynthesis; patulin biosynthesis. Acetate transporter protein; part of the gene cluster that mediates the biosynthesis of patulin, an acetate-derived tetraketide mycotoxin produced by several fungal species that shows antimicrobial properties against several bacteria. May be involved in the uptake of acetate, a substrate for the synthesis of 6-methylsalicylic acid by the polyketide synthase patK. The protein is Acetate transporter protein patA of Penicillium expansum (Blue mold rot fungus).